Here is a 296-residue protein sequence, read N- to C-terminus: 4-diphosphocytidyl-2-C-methyl-D-erythritol kinase (296 aa).

Lys-11 is an active-site residue. 95–105 (PVAAGMAGGSS) is a binding site for ATP. Residue Asp-137 is part of the active site.

The protein belongs to the GHMP kinase family. IspE subfamily.

The catalysed reaction is 4-CDP-2-C-methyl-D-erythritol + ATP = 4-CDP-2-C-methyl-D-erythritol 2-phosphate + ADP + H(+). It functions in the pathway isoprenoid biosynthesis; isopentenyl diphosphate biosynthesis via DXP pathway; isopentenyl diphosphate from 1-deoxy-D-xylulose 5-phosphate: step 3/6. Its function is as follows. Catalyzes the phosphorylation of the position 2 hydroxy group of 4-diphosphocytidyl-2C-methyl-D-erythritol. This is 4-diphosphocytidyl-2-C-methyl-D-erythritol kinase from Clostridioides difficile (strain 630) (Peptoclostridium difficile).